Here is a 224-residue protein sequence, read N- to C-terminus: UPF0758 protein Tola_0183 (224 aa).

Residues 102–224 (SLTSPQLVRR…PVSFAERGWL (123 aa)) enclose the MPN domain. Zn(2+) is bound by residues His-173, His-175, and Asp-186. The JAMM motif motif lies at 173-186 (HNHPSGVAEPSHAD).

It belongs to the UPF0758 family.

In Tolumonas auensis (strain DSM 9187 / NBRC 110442 / TA 4), this protein is UPF0758 protein Tola_0183.